The sequence spans 974 residues: ATP-dependent RNA helicase glh-2 (974 aa).

The interval 212–435 (HESGFGGGKS…SGFGGGNDGG (224 aa)) is disordered. Positions 215-250 (GFGGGKSGGFGGGNSGGSGFGSGGNSNGFGSGGGGQ) are enriched in gly residues. Residues 256–267 (NNNCFNCQQPGH) are compositionally biased toward polar residues. 2 CCHC-type zinc fingers span residues 257-274 (NNCF…DCPE) and 282-299 (RVCY…DCPE). 2 stretches are compositionally biased toward basic and acidic residues: residues 268 to 282 (RSND…REPR) and 293 to 307 (NSRD…REGR). The span at 309-364 (GFTGGSSGFGGGNGGGTGFDSGLTNGFGSGNNGESGFGSGGFGGNSNGFGSGGGGQ) shows a compositional bias: gly residues. Over residues 370–381 (NNNCFNCQQPGH) the composition is skewed to polar residues. 2 CCHC-type zinc fingers span residues 371-388 (NNCF…DCPE) and 396-413 (RVCY…DCPE). Basic and acidic residues-rich tracts occupy residues 382–396 (RSND…REPR) and 407–421 (NSRD…REGR). The segment covering 426 to 435 (SGFGGGNDGG) has biased composition (gly residues). 2 consecutive CCHC-type zinc fingers follow at residues 453 to 470 (MKCF…ECPE) and 473 to 490 (RGCF…ECPN). Residues 552–580 (KTFSEANLGETMKKNVAHAGYTKTTPIQQ) carry the Q motif motif. The Helicase ATP-binding domain occupies 583–767 (LPLIHQGHDI…RNHLKEGYIM (185 aa)). 596–603 (AQTGSGKT) contacts ATP. Positions 710–713 (DEAD) match the DEAD box motif. Residues 803–950 (DIDSYTTEKN…LVPEWMQGAS (148 aa)) enclose the Helicase C-terminal domain.

The protein belongs to the DEAD box helicase family. DDX4/VASA subfamily. In terms of assembly, interacts (via C-terminus) with kgb-1.

It carries out the reaction ATP + H2O = ADP + phosphate + H(+). Probable ATP-binding RNA helicase. The protein is ATP-dependent RNA helicase glh-2 (glh-2) of Caenorhabditis elegans.